The following is a 277-amino-acid chain: Adenylate kinase (277 aa).

53 to 58 is a binding site for ATP; the sequence is GAGKGT. The interval 73–102 is NMP; that stretch reads ATGDMLRAQVAAKTPLGREAKKIMDAGGLV. AMP is bound by residues Thr74, Arg79, 100–102, 129–132, and Gln136; these read GLV and GFPR. The segment at 170–207 is LID; it reads GRLVHPASGRSYHKIFNPPKAPMTDDATGEPLIQRSDD. ATP contacts are provided by residues Arg171 and 180 to 181; that span reads SY. The AMP site is built by Arg204 and Arg215. Gln243 contributes to the ATP binding site.

This sequence belongs to the adenylate kinase family. AK2 subfamily. In terms of assembly, monomer.

The protein resides in the cytoplasm. Its subcellular location is the cytosol. The protein localises to the mitochondrion intermembrane space. The enzyme catalyses AMP + ATP = 2 ADP. Its function is as follows. Catalyzes the reversible transfer of the terminal phosphate group between ATP and AMP. Plays an important role in cellular energy homeostasis and in adenine nucleotide metabolism. Adenylate kinase activity is critical for regulation of the phosphate utilization and the AMP de novo biosynthesis pathways. This chain is Adenylate kinase, found in Phaeosphaeria nodorum (strain SN15 / ATCC MYA-4574 / FGSC 10173) (Glume blotch fungus).